The sequence spans 426 residues: Serine--tRNA ligase (426 aa).

Thr-230 to Glu-232 provides a ligand contact to L-serine. ATP is bound at residue Arg-261–Glu-263. Glu-284 is a binding site for L-serine. An ATP-binding site is contributed by Glu-348–Ser-351. Ser-385 contributes to the L-serine binding site.

It belongs to the class-II aminoacyl-tRNA synthetase family. Type-1 seryl-tRNA synthetase subfamily. As to quaternary structure, homodimer. The tRNA molecule binds across the dimer.

The protein localises to the cytoplasm. It catalyses the reaction tRNA(Ser) + L-serine + ATP = L-seryl-tRNA(Ser) + AMP + diphosphate + H(+). The catalysed reaction is tRNA(Sec) + L-serine + ATP = L-seryl-tRNA(Sec) + AMP + diphosphate + H(+). It functions in the pathway aminoacyl-tRNA biosynthesis; selenocysteinyl-tRNA(Sec) biosynthesis; L-seryl-tRNA(Sec) from L-serine and tRNA(Sec): step 1/1. Functionally, catalyzes the attachment of serine to tRNA(Ser). Is also able to aminoacylate tRNA(Sec) with serine, to form the misacylated tRNA L-seryl-tRNA(Sec), which will be further converted into selenocysteinyl-tRNA(Sec). The sequence is that of Serine--tRNA ligase from Wolbachia pipientis subsp. Culex pipiens (strain wPip).